The primary structure comprises 750 residues: Neprilysin (750 aa).

A lipid anchor (N-myristoyl glycine) is attached at glycine 2. Over 2-28 the chain is Cytoplasmic; sequence GRSESQMDITDINAPKPKKKQRWTPLE. A phosphoserine mark is found at serine 4 and serine 6. A Stop-transfer sequence motif is present at residues 16–23; that stretch reads PKPKKKQR. A helical; Signal-anchor for type II membrane protein membrane pass occupies residues 29 to 51; it reads ISLSVLVLLLTIIAVTMIALYAT. The Extracellular segment spans residues 52–750; that stretch reads YDDGICKSSD…MNPERKCRVW (699 aa). Residues 56–750 form the Peptidase M13 domain; that stretch reads ICKSSDCIKS…MNPERKCRVW (695 aa). 6 disulfide bridges follow: cysteine 57/cysteine 62, cysteine 80/cysteine 735, cysteine 88/cysteine 695, cysteine 143/cysteine 411, cysteine 234/cysteine 242, and cysteine 621/cysteine 747. Arginine 103 contacts a peptide. N-linked (GlcNAc...) asparagine glycans are attached at residues asparagine 145 and asparagine 211. 3 N-linked (GlcNAc...) asparagine glycosylation sites follow: asparagine 285, asparagine 311, and asparagine 325. Histidine 584 serves as a coordination point for Zn(2+). Residue glutamate 585 is part of the active site. Position 588 (histidine 588) interacts with Zn(2+). An N-linked (GlcNAc...) asparagine glycan is attached at asparagine 628. Zn(2+) is bound at residue glutamate 647. Aspartate 651 functions as the Proton donor in the catalytic mechanism.

Belongs to the peptidase M13 family. Zn(2+) is required as a cofactor. In terms of processing, myristoylation is a determinant of membrane targeting. Post-translationally, glycosylation at Asn-628 is necessary both for surface expression and neutral endopeptidase activity.

The protein resides in the cell membrane. It catalyses the reaction Preferential cleavage of polypeptides between hydrophobic residues, particularly with Phe or Tyr at P1'.. It carries out the reaction substance P + H2O = substance P(1-9) + L-Leu-L-Met-NH2. The catalysed reaction is substance P + H2O = substance P(1-7) + L-Phe-Gly-L-Leu-L-Met-NH2. The enzyme catalyses neurotensin + H2O = neurotensin(1-11) + L-isoleucyl-L-leucine. It catalyses the reaction neurotensin + H2O = neurotensin(1-10) + L-tyrosyl-L-isoleucyl-L-leucine. Functionally, thermolysin-like specificity, but is almost confined on acting on polypeptides of up to 30 amino acids. Biologically important in the destruction of opioid peptides such as Met- and Leu-enkephalins by cleavage of a Gly-Phe bond. Catalyzes cleavage of bradykinin, substance P and neurotensin peptides. Able to cleave angiotensin-1, angiotensin-2 and angiotensin 1-9. Involved in the degradation of the atrial natriuretic factor (ANF). Displays UV-inducible elastase activity toward skin preelastic and elastic fibers. This Mus musculus (Mouse) protein is Neprilysin.